A 167-amino-acid chain; its full sequence is Cyclic pyranopterin monophosphate synthase 2 (167 aa).

A disordered region spans residues 1–23; the sequence is MARASGASDYRSGELSHQDERGA. Residues 11–23 show a composition bias toward basic and acidic residues; that stretch reads RSGELSHQDERGA. Substrate is bound by residues 86–88 and 122–123; these read LCH and ME. Residue Asp137 is part of the active site.

This sequence belongs to the MoaC family. In terms of assembly, homohexamer; trimer of dimers.

It carries out the reaction (8S)-3',8-cyclo-7,8-dihydroguanosine 5'-triphosphate = cyclic pyranopterin phosphate + diphosphate. Its pathway is cofactor biosynthesis; molybdopterin biosynthesis. In terms of biological role, catalyzes the conversion of (8S)-3',8-cyclo-7,8-dihydroguanosine 5'-triphosphate to cyclic pyranopterin monophosphate (cPMP). The polypeptide is Cyclic pyranopterin monophosphate synthase 2 (moaC2) (Mycobacterium bovis (strain ATCC BAA-935 / AF2122/97)).